The primary structure comprises 506 residues: Cytochrome P450 94B3 (506 aa).

Residues 2 to 22 (AFLLSFLILAFLITIIFFLSS) traverse the membrane as a helical segment. Position 447 (C447) interacts with heme.

The protein belongs to the cytochrome P450 family. Heme is required as a cofactor.

The protein resides in the membrane. Its subcellular location is the endoplasmic reticulum membrane. It carries out the reaction a jasmonyl-L-amino acid + reduced [NADPH--hemoprotein reductase] + O2 = a 12-hydroxyjasmonyl-L-alpha-amino acid + oxidized [NADPH--hemoprotein reductase] + H2O + H(+). It catalyses the reaction L-isoleucine-(+)-7-isojasmonate + NADPH + O2 + H(+) = L-isoleucine-(+)-12-hydroxy-7-isojasmonate + NADP(+) + H2O. The catalysed reaction is a jasmonyl-L-isoleucinate + NADPH + O2 + H(+) = L-isoleucine-12-hydroxyjasmonate + NADP(+) + H2O. Functionally, hydroxylase involved in the oxidation of the plant hormone jasmonoyl-L-isoleucine (JA-Ile), a bioactive phytohormone of the jasmonate-mediated signaling pathway. Converts JA-Ile to 12-hydroxy-JA-Ile. Exerts negative feedback control on JA-Ile levels and plays a key role in attenuation of jasmonate responses. Negatively regulates the expression of wound-induced genes TIFY11A/JAZ5, TIFY5A/JAZ8 and TIFY5A/JAZ10. Catalyzes the hydroxylation of jasmonoyl-L-valine (JA-Val), jasmonoyl-L-leucine (JA-Leu) and jasmonoyl-L-phenylalanine (JA-Phe) in vitro. Converts JA-Val, JA-Leu and JA-Phe to 12-hydroxy-JA-Val, 12-hydroxy-JA-Leu and 12-hydroxy-JA-Phe, respectively. This is Cytochrome P450 94B3 from Arabidopsis thaliana (Mouse-ear cress).